The following is a 258-amino-acid chain: Acetylglutamate kinase (258 aa).

Residues 41-42, R63, and N156 contribute to the substrate site; that span reads GG.

The protein belongs to the acetylglutamate kinase family. ArgB subfamily.

The protein resides in the cytoplasm. The catalysed reaction is N-acetyl-L-glutamate + ATP = N-acetyl-L-glutamyl 5-phosphate + ADP. The protein operates within amino-acid biosynthesis; L-arginine biosynthesis; N(2)-acetyl-L-ornithine from L-glutamate: step 2/4. Catalyzes the ATP-dependent phosphorylation of N-acetyl-L-glutamate. The chain is Acetylglutamate kinase from Bacillus velezensis (strain DSM 23117 / BGSC 10A6 / LMG 26770 / FZB42) (Bacillus amyloliquefaciens subsp. plantarum).